The following is a 538-amino-acid chain: Chaperonin GroEL (538 aa).

ATP contacts are provided by residues 29-32, 86-90, Gly413, 476-478, and Asp492; these read TIGP, DGTTT, and NAA.

Belongs to the chaperonin (HSP60) family. As to quaternary structure, forms a cylinder of 14 subunits composed of two heptameric rings stacked back-to-back. Interacts with the co-chaperonin GroES.

Its subcellular location is the cytoplasm. The enzyme catalyses ATP + H2O + a folded polypeptide = ADP + phosphate + an unfolded polypeptide.. Together with its co-chaperonin GroES, plays an essential role in assisting protein folding. The GroEL-GroES system forms a nano-cage that allows encapsulation of the non-native substrate proteins and provides a physical environment optimized to promote and accelerate protein folding. In Staphylococcus aureus (strain USA300), this protein is Chaperonin GroEL.